A 251-amino-acid chain; its full sequence is 5'-nucleotidase SurE (251 aa).

A divalent metal cation contacts are provided by Asp-8, Asp-9, Ser-39, and Asn-95.

This sequence belongs to the SurE nucleotidase family. Requires a divalent metal cation as cofactor.

It localises to the cytoplasm. It carries out the reaction a ribonucleoside 5'-phosphate + H2O = a ribonucleoside + phosphate. Nucleotidase that shows phosphatase activity on nucleoside 5'-monophosphates. The chain is 5'-nucleotidase SurE from Ralstonia pickettii (strain 12J).